The following is a 26-amino-acid chain: Conotoxin Eb6.17 (26 aa).

2 disulfides stabilise this stretch: C7–C18 and C13–C25.

It belongs to the conotoxin O1 superfamily. As to expression, expressed by the venom duct.

It is found in the secreted. This Conus ebraeus (Hebrew cone) protein is Conotoxin Eb6.17 (E1).